The following is a 297-amino-acid chain: Phosphatidylserine decarboxylase proenzyme (297 aa).

Active-site charge relay system; for autoendoproteolytic cleavage activity residues include Asp100, His157, and Ser263. Ser263 (schiff-base intermediate with substrate; via pyruvic acid; for decarboxylase activity) is an active-site residue. Ser263 carries the post-translational modification Pyruvic acid (Ser); by autocatalysis.

Belongs to the phosphatidylserine decarboxylase family. PSD-B subfamily. Prokaryotic type I sub-subfamily. As to quaternary structure, heterodimer of a large membrane-associated beta subunit and a small pyruvoyl-containing alpha subunit. The cofactor is pyruvate. Is synthesized initially as an inactive proenzyme. Formation of the active enzyme involves a self-maturation process in which the active site pyruvoyl group is generated from an internal serine residue via an autocatalytic post-translational modification. Two non-identical subunits are generated from the proenzyme in this reaction, and the pyruvate is formed at the N-terminus of the alpha chain, which is derived from the carboxyl end of the proenzyme. The autoendoproteolytic cleavage occurs by a canonical serine protease mechanism, in which the side chain hydroxyl group of the serine supplies its oxygen atom to form the C-terminus of the beta chain, while the remainder of the serine residue undergoes an oxidative deamination to produce ammonia and the pyruvoyl prosthetic group on the alpha chain. During this reaction, the Ser that is part of the protease active site of the proenzyme becomes the pyruvoyl prosthetic group, which constitutes an essential element of the active site of the mature decarboxylase.

The protein localises to the cell membrane. The catalysed reaction is a 1,2-diacyl-sn-glycero-3-phospho-L-serine + H(+) = a 1,2-diacyl-sn-glycero-3-phosphoethanolamine + CO2. The protein operates within phospholipid metabolism; phosphatidylethanolamine biosynthesis; phosphatidylethanolamine from CDP-diacylglycerol: step 2/2. Functionally, catalyzes the formation of phosphatidylethanolamine (PtdEtn) from phosphatidylserine (PtdSer). The chain is Phosphatidylserine decarboxylase proenzyme from Glaesserella parasuis serovar 5 (strain SH0165) (Haemophilus parasuis).